A 313-amino-acid polypeptide reads, in one-letter code: uncharacterized protein (313 aa).

2 disordered regions span residues 24 to 53 (EEGE…PTPN) and 190 to 291 (TALS…PCAR). Positions 211–229 (TQNYVLKLQLSSPNSQPMS) are enriched in polar residues. Positions 239-260 (SCSSSNCSSSSSSSACSSVSIS) are enriched in low complexity. The segment covering 261-284 (DPNNITAYETNNVNPQFPSNQPLD) has biased composition (polar residues).

This is an uncharacterized protein from Saccharomyces cerevisiae (strain ATCC 204508 / S288c) (Baker's yeast).